Here is a 448-residue protein sequence, read N- to C-terminus: MAHIKFDYSKLTPFVAENELDEIQWQIDGAAKLLHEGKGAGSDYIGWLDLPEDYDKEEFARIQKAAKKIQSDSEVLIVIGIGGSYLGARAAIDFLSNSFVNLQTAEERKAPRILYAGNSISSSYLADLVDYVADKDFSVNVISKSGTTTEPAIAFRVFEEMLVKKYGREEANKRIYATTDKEKGAVKVNADANNWETFVVPDSVGGRFSVLTAVGLLPIAASGADITALMEGANAARKEYTSTNVHENDAYAYAALRNILYRKGKFSEILINYEPSLQYFSEWWKQLAGESEGKDQKGIYPTSANFSTDLHSLGQWIQEGTRTVFETAIRIEKPRKNINIPELDADLDGLGYLQGKDVDFVNKKAADGVLLAHTDGNVPNMIVTLPEQDEFTLGYAIYFFELAIGVSGYLNGINPFNQPGVEAYKKNMFALLGKPGFEELSKELNDRL.

The active-site Proton donor is the E290. Residues H311 and K425 contribute to the active site.

The protein belongs to the GPI family.

It is found in the cytoplasm. The catalysed reaction is alpha-D-glucose 6-phosphate = beta-D-fructose 6-phosphate. Its pathway is carbohydrate biosynthesis; gluconeogenesis. It functions in the pathway carbohydrate degradation; glycolysis; D-glyceraldehyde 3-phosphate and glycerone phosphate from D-glucose: step 2/4. Catalyzes the reversible isomerization of glucose-6-phosphate to fructose-6-phosphate. This Lactococcus lactis subsp. lactis (strain IL1403) (Streptococcus lactis) protein is Glucose-6-phosphate isomerase.